The chain runs to 432 residues: 5'-deoxyadenosine deaminase (432 aa).

H63 and H65 together coordinate Zn(2+). Residues E92 and H184 each contribute to the substrate site. Residue H211 coordinates Zn(2+). Substrate-binding residues include E214 and D299. D299 lines the Zn(2+) pocket.

This sequence belongs to the metallo-dependent hydrolases superfamily. MTA/SAH deaminase family. As to quaternary structure, homotetramer. Requires Zn(2+) as cofactor.

It catalyses the reaction 5'-deoxyadenosine + H2O + H(+) = 5'-deoxyinosine + NH4(+). It carries out the reaction S-adenosyl-L-homocysteine + H2O + H(+) = S-inosyl-L-homocysteine + NH4(+). The enzyme catalyses S-methyl-5'-thioadenosine + H2O + H(+) = S-methyl-5'-thioinosine + NH4(+). The catalysed reaction is adenosine + H2O + H(+) = inosine + NH4(+). It functions in the pathway amino-acid biosynthesis; S-adenosyl-L-methionine biosynthesis. Catalyzes the deamination of three SAM-derived enzymatic products, namely 5'-deoxyadenosine, S-adenosyl-L-homocysteine, and 5'-methylthioadenosine, to produce the inosine analogs. Can also deaminate adenosine. The preferred substrate for this enzyme is 5'-deoxyadenosine, but all these substrates are efficiently deaminated. Likely functions in a S-adenosyl-L-methionine (SAM) recycling pathway from S-adenosyl-L-homocysteine (SAH) produced from SAM-dependent methylation reactions. May also be involved in the recycling of 5'-deoxyadenosine, whereupon the 5'-deoxyribose moiety of 5'-deoxyinosine is further metabolized to deoxyhexoses used for the biosynthesis of aromatic amino acids in methanogens. This is 5'-deoxyadenosine deaminase from Methanosarcina barkeri (strain Fusaro / DSM 804).